Here is a 189-residue protein sequence, read N- to C-terminus: Insecticyanin-A (189 aa).

2 disulfide bridges follow: cysteine 9–cysteine 119 and cysteine 43–cysteine 175.

This sequence belongs to the calycin superfamily. Lipocalin family. Homotetramer. In terms of tissue distribution, synthesized only in the caterpillars, apparently by the epidermis and secreted into the hemolymph. The protein is passed over from the larval hemolymph to that of pupae and adults and is sequestered in the eggs.

The protein resides in the secreted. Functionally, this protein binds a chromophore: biliverdin IX, isomer gamma. Mixed with lipoprotein-bound carotenes, this blue protein provides hornworms with their green cryptic coloration which serves a camouflage. In Manduca sexta (Tobacco hawkmoth), this protein is Insecticyanin-A (INSA).